A 258-amino-acid polypeptide reads, in one-letter code: tRNA pseudouridine synthase A (258 aa).

Residue Asp52 is the Nucleophile of the active site. Residue Tyr110 coordinates substrate.

It belongs to the tRNA pseudouridine synthase TruA family. In terms of assembly, homodimer.

The catalysed reaction is uridine(38/39/40) in tRNA = pseudouridine(38/39/40) in tRNA. Its function is as follows. Formation of pseudouridine at positions 38, 39 and 40 in the anticodon stem and loop of transfer RNAs. This is tRNA pseudouridine synthase A from Francisella tularensis subsp. mediasiatica (strain FSC147).